The sequence spans 209 residues: Large ribosomal subunit protein uL3 (209 aa).

The residue at position 150 (glutamine 150) is an N5-methylglutamine.

The protein belongs to the universal ribosomal protein uL3 family. As to quaternary structure, part of the 50S ribosomal subunit. Forms a cluster with proteins L14 and L19. In terms of processing, methylated by PrmB.

Its function is as follows. One of the primary rRNA binding proteins, it binds directly near the 3'-end of the 23S rRNA, where it nucleates assembly of the 50S subunit. The protein is Large ribosomal subunit protein uL3 of Pasteurella multocida (strain Pm70).